The chain runs to 435 residues: Glutamine synthetase (435 aa).

In terms of domain architecture, GS beta-grasp spans 12 to 94 (KSIKYFMISY…VAADCVMDDR (83 aa)). Residues 100–435 (PRVVLKRLVA…QWERDSTLDI (336 aa)) form the GS catalytic domain. The Mg(2+) site is built by glutamate 123, glutamate 125, glutamate 180, and glutamate 187. Glycine 232 contributes to the L-glutamate binding site. Histidine 236 contributes to the Mg(2+) binding site. An ATP-binding site is contributed by serine 240. Arginine 291 and arginine 315 together coordinate L-glutamate. Residues arginine 315 and arginine 320 each coordinate ATP. Residue glutamate 328 coordinates Mg(2+). Arginine 330 is an L-glutamate binding site.

Belongs to the glutamine synthetase family. As to quaternary structure, homooctamer. Requires Mg(2+) as cofactor.

The enzyme catalyses L-glutamate + NH4(+) + ATP = L-glutamine + ADP + phosphate + H(+). In terms of biological role, catalyzes the ATP-dependent biosynthesis of glutamine from glutamate and ammonia. In Rhizobium leguminosarum bv. phaseoli, this protein is Glutamine synthetase.